The chain runs to 425 residues: Serine--tRNA ligase (425 aa).

229–231 (TSE) contributes to the L-serine binding site. Residues 259–261 (RKE) and V275 contribute to the ATP site. E282 lines the L-serine pocket. 349–352 (EITS) is a binding site for ATP. Position 384 (T384) interacts with L-serine.

Belongs to the class-II aminoacyl-tRNA synthetase family. Type-1 seryl-tRNA synthetase subfamily. Homodimer. The tRNA molecule binds across the dimer.

It is found in the cytoplasm. The enzyme catalyses tRNA(Ser) + L-serine + ATP = L-seryl-tRNA(Ser) + AMP + diphosphate + H(+). It carries out the reaction tRNA(Sec) + L-serine + ATP = L-seryl-tRNA(Sec) + AMP + diphosphate + H(+). It participates in aminoacyl-tRNA biosynthesis; selenocysteinyl-tRNA(Sec) biosynthesis; L-seryl-tRNA(Sec) from L-serine and tRNA(Sec): step 1/1. Catalyzes the attachment of serine to tRNA(Ser). Is also able to aminoacylate tRNA(Sec) with serine, to form the misacylated tRNA L-seryl-tRNA(Sec), which will be further converted into selenocysteinyl-tRNA(Sec). The sequence is that of Serine--tRNA ligase from Borreliella afzelii (strain PKo) (Borrelia afzelii).